Here is a 450-residue protein sequence, read N- to C-terminus: Putative nucleolar protein 5-3 (450 aa).

Residues 252-370 (IAPNLTALVG…LEARLRNLEG (119 aa)) form the Nop domain. Residues 375–423 (ACEEEEEVNDKDTKKEADDEEEPKTEECSKKRKKEAELETVEDPAKKSK) form a disordered region. Basic and acidic residues predominate over residues 399 to 423 (TEECSKKRKKEAELETVEDPAKKSK).

It belongs to the NOP5/NOP56 family.

Its subcellular location is the nucleus. The protein resides in the nucleolus. Required for 60S ribosomal subunit biogenesis. This chain is Putative nucleolar protein 5-3 (NOP5-3), found in Arabidopsis thaliana (Mouse-ear cress).